The primary structure comprises 524 residues: Bifunctional purine biosynthesis protein PurH (524 aa).

An MGS-like domain is found at 1-149 (MSDPVIKRAL…KNNESVTVVT (149 aa)).

It belongs to the PurH family.

The catalysed reaction is (6R)-10-formyltetrahydrofolate + 5-amino-1-(5-phospho-beta-D-ribosyl)imidazole-4-carboxamide = 5-formamido-1-(5-phospho-D-ribosyl)imidazole-4-carboxamide + (6S)-5,6,7,8-tetrahydrofolate. It catalyses the reaction IMP + H2O = 5-formamido-1-(5-phospho-D-ribosyl)imidazole-4-carboxamide. It functions in the pathway purine metabolism; IMP biosynthesis via de novo pathway; 5-formamido-1-(5-phospho-D-ribosyl)imidazole-4-carboxamide from 5-amino-1-(5-phospho-D-ribosyl)imidazole-4-carboxamide (10-formyl THF route): step 1/1. The protein operates within purine metabolism; IMP biosynthesis via de novo pathway; IMP from 5-formamido-1-(5-phospho-D-ribosyl)imidazole-4-carboxamide: step 1/1. This Chlorobium chlorochromatii (strain CaD3) protein is Bifunctional purine biosynthesis protein PurH.